A 334-amino-acid chain; its full sequence is F-box protein AUF1 (334 aa).

An F-box domain is found at 1 to 49; it reads MDAFDAIPDPVVIDILNRVGDVKTLIRCRSVSKRFNSLATQSESLLLQL.

Part of a SCF (ASK-cullin-F-box) protein ligase complex. Interacts with SKP1A/ASK1, SKP1B/ASK2, ASK11 and ASK13.

It localises to the nucleus. Its pathway is protein modification; protein ubiquitination. Its function is as follows. Component of SCF(ASK-cullin-F-box) E3 ubiquitin ligase complexes, which may mediate the ubiquitination and subsequent proteasomal degradation of target proteins. Involved in the control of basipetal and acropetal auxin transport by promoting the distribution and expression of the auxin transporter PIN2. Promotes cytokinin-mediated cell expansion in the root elongation and differentiation zone, without affecting root cell division. The sequence is that of F-box protein AUF1 from Arabidopsis thaliana (Mouse-ear cress).